The following is a 38-amino-acid chain: Large ribosomal subunit protein bL36 (38 aa).

The protein belongs to the bacterial ribosomal protein bL36 family.

This chain is Large ribosomal subunit protein bL36, found in Sorangium cellulosum (strain So ce56) (Polyangium cellulosum (strain So ce56)).